Consider the following 515-residue polypeptide: Synaptic vesicular amine transporter (515 aa).

The Cytoplasmic portion of the chain corresponds to 1 to 20; the sequence is MALSDLVLLRWLRDSRHSRK. Residues 21-41 traverse the membrane as a helical segment; the sequence is LILFIVFLALLLDNMLLTVVV. At 42–130 the chain is on the lumenal, vesicle side; sequence PIIPSYLYSI…EDRDLLNENV (89 aa). N-linked (GlcNAc...) asparagine glycosylation is found at asparagine 56, asparagine 80, asparagine 81, asparagine 89, and asparagine 111. A disulfide bridge links cysteine 118 with cysteine 325. A helical membrane pass occupies residues 131–151; sequence QVGLLFASKATVQLLTNPFIG. At 152 to 160 the chain is on the cytoplasmic side; that stretch reads LLTNRIGYP. Residues 161-181 form a helical membrane-spanning segment; the sequence is IPMFAGFCIMFISTVMFAFSS. Residues 182 to 190 are Lumenal, vesicle-facing; that stretch reads SYAFLLIAR. A helical membrane pass occupies residues 191–211; sequence SLQGIGSSCSSVAGMGMLASV. The Cytoplasmic portion of the chain corresponds to 212-220; sequence YTDDEERGK. A helical membrane pass occupies residues 221–243; sequence PMGIALGGLAMGVLVGPPFGSVL. Leucine 229 and valine 233 together coordinate serotonin. At 244-249 the chain is on the lumenal, vesicle side; that stretch reads YEFVGK. The chain crosses the membrane as a helical span at residues 250–272; it reads TAPFLVLAALVLLDGAIQLFVLQ. Over 273-292 the chain is Cytoplasmic; sequence PSRVQPESQKGTPLTTLLKD. Residues 293-312 traverse the membrane as a helical segment; sequence PYILIAAGSICFANMGIAML. Residues asparagine 306, isoleucine 309, glutamate 313, phenylalanine 335, and tyrosine 342 each coordinate serotonin. The Lumenal, vesicle segment spans residues 313–329; it reads EPALPIWMMETMCSRKW. The chain crosses the membrane as a helical span at residues 330–353; the sequence is QLGVAFLPASISYLIGTNIFGILA. Residues 354–358 lie on the Cytoplasmic side of the membrane; sequence HKMGR. A helical membrane pass occupies residues 359–379; sequence WLCALLGMVIVGISILCIPFA. Topologically, residues 380 to 390 are lumenal, vesicle; that stretch reads KNIYGLIAPNF. Residues 391–411 traverse the membrane as a helical segment; that stretch reads GVGFAIGMVDSSMMPIMGYLV. Residue aspartate 400 coordinates serotonin. Topologically, residues 412–415 are cytoplasmic; sequence DLRH. The helical transmembrane segment at 416 to 436 threads the bilayer; that stretch reads VSVYGSVYAIADVAFCMGYAI. Tyrosine 434 is a serotonin binding site. At 437 to 441 the chain is on the lumenal, vesicle side; sequence GPSAG. Residues 442 to 463 traverse the membrane as a helical segment; that stretch reads GAIAKAIGFPWLMTIIGIIDIA. Residues 464–515 lie on the Cytoplasmic side of the membrane; that stretch reads FAPLCFFLRSPPAKEEKMAILMDHNCPIKRKMYTQNNVQSYPIGDDEESESD. Phosphoserine; by CK2 occurs at positions 512 and 514.

Belongs to the major facilitator superfamily. Vesicular transporter family. Interacts with SLC6A3. As to expression, expressed in the substantia nigra and the tuberomammillary nucleus of the posterior hypothalamus. Expressed in stomach, in particular in varicose nerve fibers and enterochromaffin-like cells in the corpus region (at protein level).

It localises to the cytoplasmic vesicle. It is found in the secretory vesicle. The protein resides in the synaptic vesicle membrane. Its subcellular location is the secretory vesicle membrane. The protein localises to the cell projection. It localises to the axon. It is found in the dendrite. It catalyses the reaction serotonin(in) + 2 H(+)(out) = serotonin(out) + 2 H(+)(in). It carries out the reaction dopamine(in) + 2 H(+)(out) = dopamine(out) + 2 H(+)(in). The catalysed reaction is histamine(in) + 2 H(+)(out) = histamine(out) + 2 H(+)(in). Its activity is regulated as follows. Strongly inhibited by reserpine and tetrabenazine. Also inhibited to a lesser extent by ketanserin and fenfluramine. Reserpine and ketanserin inhibit by blocking the substrate-binding pocket. Tetrabenazine traps SLC18A2/VMAT2 in an occluded conformation and its inhibition is specific to SLC18A2/VMAT2 but not SLC18A1/VMAT1. Functionally, electrogenic antiporter that exchanges one cationic monoamine with two intravesicular protons across the membrane of secretory and synaptic vesicles. Uses the electrochemical proton gradient established by the V-type proton-pump ATPase to accumulate high concentrations of monoamines inside the vesicles prior to their release via exocytosis. Transports a variety of catecholamines such as dopamine, adrenaline and noradrenaline, histamine, and indolamines such as serotonin. Regulates the transvesicular monoaminergic gradient that determines the quantal size. Mediates somatodendritic dopamine release in hippocampal neurons, likely as part of a regulated secretory pathway that integrates retrograde synaptic signals. Acts as a primary transporter for striatal dopamine loading ensuring impulse-dependent release of dopamine at the synaptic cleft. Responsible for histamine and serotonin storage and subsequent corelease from mast cell granules. The polypeptide is Synaptic vesicular amine transporter (Slc18a2) (Rattus norvegicus (Rat)).